The sequence spans 209 residues: MKRLWDISPPVSADSPVFPGDTPYRQQWKWSLTPDCPVNVSEITLSPHIGAHADAPLHYENGAAAIGAVALEPFLGPCRVIHAIGCGPLILPEHLAHAQAGLPPRVLVRTARHAALQWWVDDFSAYAPQTIEWLAGRGVTLIGIDTPSIDPASSKTLDSHHAIRRHDMRVLENLRLDDVDEGDYELIALPLALVQADASPVRAVLRELA.

Residue Phe-18 participates in substrate binding. Zn(2+)-binding residues include His-48, His-52, and Asp-54. The active-site Proton donor/acceptor is the His-58. Zn(2+) contacts are provided by His-160 and Glu-172.

This sequence belongs to the Cyclase 1 superfamily. KynB family. As to quaternary structure, homodimer. It depends on Zn(2+) as a cofactor.

The enzyme catalyses N-formyl-L-kynurenine + H2O = L-kynurenine + formate + H(+). It participates in amino-acid degradation; L-tryptophan degradation via kynurenine pathway; L-kynurenine from L-tryptophan: step 2/2. Functionally, catalyzes the hydrolysis of N-formyl-L-kynurenine to L-kynurenine, the second step in the kynurenine pathway of tryptophan degradation. The protein is Kynurenine formamidase of Bordetella bronchiseptica (strain ATCC BAA-588 / NCTC 13252 / RB50) (Alcaligenes bronchisepticus).